A 347-amino-acid polypeptide reads, in one-letter code: Terpene synthase 2 (347 aa).

4 residues coordinate Mg(2+): Asp103, Asn247, Ser251, and Glu255. Residues 103 to 107 carry the D(D/E)XX(D/E) motif motif; that stretch reads DDLLE. The NSE motif signature appears at 247–255; the sequence is NDIFSLKKE. A WxxxxxRY motif motif is present at residues 329–336; sequence WCSKSTRY.

This sequence belongs to the terpene synthase family. Requires Mg(2+) as cofactor.

In terms of biological role, terpene synthase that may be involved in the production of volatile terpenoids. Does not show detectable terpene products with either farnesyl diphosphate (FPP) or geranyl diphosphate (GPP). P.polycephalum has a unique biology and these volatile terpenoids could function in internal communication of P.polycephalum, to mark the territory that have been explored, or they may be involved in chemotaxis. This chain is Terpene synthase 2, found in Physarum polycephalum (Slime mold).